Reading from the N-terminus, the 303-residue chain is Histone deacetylase HDT2 (303 aa).

The span at 100-112 (EMDLDSEDEEEEL) shows a compositional bias: acidic residues. The segment at 100–282 (EMDLDSEDEE…SGGSVPCKSC (183 aa)) is disordered. Over residues 119-133 (ENGKADGKEEQKNQE) the composition is skewed to basic and acidic residues. Acidic residues predominate over residues 154-203 (DSDDSDEDESDDSDEDDSDDSDEGEGLSPDEGDDDSSDEDDTSDDDEEET). Residues 204-217 (PTPKKPEAGKKRGA) are compositionally biased toward basic and acidic residues. The C2H2-type zinc finger occupies 277–300 (VPCKSCSKTFNSEMALQAHSKAKH).

This sequence belongs to the histone deacetylase HD2 family. In terms of assembly, multimer. Possibly forms a homotrimer with HDT1 and/or HDT3.

The protein resides in the nucleus. Its subcellular location is the nucleolus. Mediates the deacetylation of lysine residues on the N-terminal part of the core histones (H2A, H2B, H3 and H4). Histone deacetylation gives a tag for epigenetic repression and plays an important role in transcriptional regulation, cell cycle progression and developmental events. The polypeptide is Histone deacetylase HDT2 (HDT2) (Zea mays (Maize)).